The primary structure comprises 376 residues: Decapping nuclease RAI1 (376 aa).

E168 contributes to the a divalent metal cation binding site. Substrate contacts are provided by C200 and E217. 3 residues coordinate a divalent metal cation: D219, E237, and L238. K239 and Q263 together coordinate substrate.

This sequence belongs to the DXO/Dom3Z family. In terms of assembly, interacts with RAT1; the interaction is direct, stabilizes RAT1 protein structure and stimulates its exoribonuclease activity. The interaction also stimulates RAI1 pyrophosphohydrolase activity, probably by recruiting it to mRNA substrates. The cofactor is a divalent metal cation.

It localises to the nucleus. It catalyses the reaction a 5'-end NAD(+)-phospho-ribonucleoside in mRNA + H2O = a 5'-end phospho-ribonucleoside in mRNA + NAD(+) + H(+). The catalysed reaction is a 5'-end (N(7)-methyl 5'-triphosphoguanosine)-ribonucleoside-ribonucleotide in mRNA + H2O = a (N(7)-methyl 5'-triphosphoguanosine)-nucleoside + a 5'-end phospho-ribonucleoside in mRNA + H(+). The enzyme catalyses a 5'-end triphospho-ribonucleoside in mRNA + H2O = a 5'-end phospho-ribonucleoside in mRNA + diphosphate + H(+). Decapping enzyme for NAD-capped RNAs: specifically hydrolyzes the nicotinamide adenine dinucleotide (NAD) cap from a subset of RNAs by removing the entire NAD moiety from the 5'-end of an NAD-capped RNA. The NAD-cap is present at the 5'-end of some RNAs and snoRNAs. In contrast to the canonical 5'-end N7 methylguanosine (m7G) cap, the NAD cap promotes mRNA decay. Also acts as a non-canonical decapping enzyme that removes the entire cap structure of m7G capped or incompletely capped RNAs. Has decapping activity toward incomplete 5'-end m7G cap mRNAs such as unmethylated 5'-end-capped RNA (cap0), while it has no activity toward 2'-O-ribose methylated m7G cap (cap1). Also possesses RNA 5'-pyrophosphohydrolase activity by hydrolyzing the 5'-end triphosphate to release pyrophosphates. Stimulates exoribonuclease activity of Rat1, allowing it to degrade RNAs with stable secondary structure more effectively. The polypeptide is Decapping nuclease RAI1 (RAI1) (Gibberella zeae (strain ATCC MYA-4620 / CBS 123657 / FGSC 9075 / NRRL 31084 / PH-1) (Wheat head blight fungus)).